Reading from the N-terminus, the 159-residue chain is Kojic acid related protein 6 (159 aa).

In terms of biological role, negatively regulates mycelium growth and conidial formation and is required for stress tolerance. Plays a role in kojic acid synthesis in coordination with kojA, kojR and kojT where it acts upstream of kojA. This is Kojic acid related protein 6 from Aspergillus oryzae (strain ATCC 42149 / RIB 40) (Yellow koji mold).